The sequence spans 323 residues: Putative HTH-type transcriptional regulatory protein Hlac_0273 (323 aa).

Residues 132–189 (LADEREERGWSLGRLATELGVSRRTVSKYEDGMNASIEVAIQLEDLFNEPFSSPVDVL) form the HTH cro/C1-type domain. A DNA-binding region (H-T-H motif) is located at residues 143-162 (LGRLATELGVSRRTVSKYED). The tract at residues 188–211 (VLDGAGEVRDADPTPSAPETDPDD) is disordered.

The chain is Putative HTH-type transcriptional regulatory protein Hlac_0273 from Halorubrum lacusprofundi (strain ATCC 49239 / DSM 5036 / JCM 8891 / ACAM 34).